The sequence spans 189 residues: Elongation factor P (189 aa).

Belongs to the elongation factor P family.

The protein resides in the cytoplasm. It participates in protein biosynthesis; polypeptide chain elongation. Functionally, involved in peptide bond synthesis. Stimulates efficient translation and peptide-bond synthesis on native or reconstituted 70S ribosomes in vitro. Probably functions indirectly by altering the affinity of the ribosome for aminoacyl-tRNA, thus increasing their reactivity as acceptors for peptidyl transferase. The protein is Elongation factor P of Campylobacter lari (strain RM2100 / D67 / ATCC BAA-1060).